The primary structure comprises 61 residues: Small ribosomal subunit protein uS14 (61 aa).

Cys24, Cys27, Cys40, and Cys43 together coordinate Zn(2+).

It belongs to the universal ribosomal protein uS14 family. Zinc-binding uS14 subfamily. Part of the 30S ribosomal subunit. Contacts proteins S3 and S10. Zn(2+) is required as a cofactor.

Binds 16S rRNA, required for the assembly of 30S particles and may also be responsible for determining the conformation of the 16S rRNA at the A site. This chain is Small ribosomal subunit protein uS14, found in Desulforamulus reducens (strain ATCC BAA-1160 / DSM 100696 / MI-1) (Desulfotomaculum reducens).